Here is a 306-residue protein sequence, read N- to C-terminus: Recombination-associated protein RdgC (306 aa).

It belongs to the RdgC family.

Its subcellular location is the cytoplasm. It is found in the nucleoid. Its function is as follows. May be involved in recombination. This is Recombination-associated protein RdgC from Pseudomonas aeruginosa (strain LESB58).